The following is a 792-amino-acid chain: Ribonucleoside-diphosphate reductase large subunit (792 aa).

Residues Thr200, 215 to 216 (SC), Gly246, 415 to 419 (NLCAE), and 606 to 610 (PTAGT) contribute to the substrate site. Cys216 and Cys431 are oxidised to a cystine. Asn415 serves as the catalytic Proton acceptor. Cys417 (cysteine radical intermediate) is an active-site residue. The active-site Proton acceptor is Glu419. The tract at residues 758-781 (SPPHSGMKQDGAWLPGPKNPEEES) is disordered.

This sequence belongs to the ribonucleoside diphosphate reductase large chain family. As to quaternary structure, heterotetramer composed of a homodimer of the large subunit (R1) and a homodimer of the small subunit (R2). Larger multisubunit protein complex are also active, composed of (R1)n(R2)n.

The enzyme catalyses a 2'-deoxyribonucleoside 5'-diphosphate + [thioredoxin]-disulfide + H2O = a ribonucleoside 5'-diphosphate + [thioredoxin]-dithiol. In terms of biological role, ribonucleoside-diphosphate reductase holoenzyme provides the precursors necessary for viral DNA synthesis. Allows virus growth in non-dividing cells, as well as reactivation from latency in infected hosts. Catalyzes the biosynthesis of deoxyribonucleotides from the corresponding ribonucleotides. In Human herpesvirus 8 type P (isolate GK18) (HHV-8), this protein is Ribonucleoside-diphosphate reductase large subunit.